The sequence spans 258 residues: Protein CHAPERONE-LIKE PROTEIN OF POR1, chloroplastic (258 aa).

The transit peptide at 1–48 (MSSSLLLSGSTVSSSFIAPSKPSLVRNSSKTSLLPFRNVSRSFKTVKC) directs the protein to the chloroplast. Position 49 is an N-acetylthreonine (T49). Positions 67 to 122 (WDPYKRLGVSPYASEEEIWASRNFLLQQYAGHERSEESIEGAFEKLLMSSFIRRKK) are J-like domain required for holdase chaperone activity. The next 3 helical transmembrane spans lie at 162 to 182 (FLFA…GPAF), 207 to 227 (LIGI…IPMI), and 237 to 257 (TLEL…CTFL).

Belongs to the chaperone-like protein of POR1 protein family. Interacts with PORB in chloroplast. Interacts with PORA during plastid import. As to expression, expressed ubiquitously with higher levels in young leaves, flowers, and the root elongation zone.

It is found in the mitochondrion membrane. It localises to the plastid. The protein resides in the chloroplast envelope. The protein localises to the chloroplast thylakoid membrane. Its function is as follows. Essential protein required during embryogenesis. Exhibits holdase chaperone activity involved in the stabilization of NADPH:protochlorophyllide oxidoreductase (POR) proteins against photooxidative stress during POR proteins import into chloroplasts. Required for chloroplast biogenesis and development. When expressed in yeast, triggers mitochondria-mediated cell death associated with the loss of mitochondrial membrane potential. This is Protein CHAPERONE-LIKE PROTEIN OF POR1, chloroplastic from Arabidopsis thaliana (Mouse-ear cress).